The sequence spans 266 residues: Heat-inducible transcription repressor HrcA (266 aa).

This sequence belongs to the HrcA family.

Negative regulator of class I heat shock genes (grpE-dnaK-dnaJ and groELS operons). Prevents heat-shock induction of these operons. This Helicobacter pylori (strain ATCC 700392 / 26695) (Campylobacter pylori) protein is Heat-inducible transcription repressor HrcA.